The chain runs to 241 residues: Proteasome subunit alpha (241 aa).

It belongs to the peptidase T1A family. As to quaternary structure, the 20S proteasome core is composed of 14 alpha and 14 beta subunits that assemble into four stacked heptameric rings, resulting in a barrel-shaped structure. The two inner rings, each composed of seven catalytic beta subunits, are sandwiched by two outer rings, each composed of seven alpha subunits. The catalytic chamber with the active sites is on the inside of the barrel. Has a gated structure, the ends of the cylinder being occluded by the N-termini of the alpha-subunits. Is capped at one or both ends by the proteasome regulatory ATPase, PAN.

It is found in the cytoplasm. With respect to regulation, the formation of the proteasomal ATPase PAN-20S proteasome complex, via the docking of the C-termini of PAN into the intersubunit pockets in the alpha-rings, triggers opening of the gate for substrate entry. Interconversion between the open-gate and close-gate conformations leads to a dynamic regulation of the 20S proteasome proteolysis activity. Functionally, component of the proteasome core, a large protease complex with broad specificity involved in protein degradation. The protein is Proteasome subunit alpha of Saccharolobus solfataricus (strain ATCC 35092 / DSM 1617 / JCM 11322 / P2) (Sulfolobus solfataricus).